Consider the following 616-residue polypeptide: MDDHSPRDAAETPAPGPAATPAKRVYETPPTSRPITDAEAARAEKLAANEHIKIASGYLRGTLADGLLKHATGAISEDDGQLVKFHGMYLQDDRDLRPERTKKKLDKAYSFMIRLRIAGGVITPKQWLILDDIARTYAGGALRATTRQTFQYHGVIKSNLKRTMAAIDGALLDTIAACGDVNRNVMAATNPAQTGAHKAAYQLAKDISDSLLPKTSAWREIWLDGERVVGGEDEAEVEPVYGRTYLPRKFKTVVAVPPSNEVDIFAHDLGFIAILDKKNQVTGWNVTVGGGMGMTHGEPDTFPRTADVMGFVKPEDALKVAEAVMTVQRDWGNRKNRKNARLKYTIERYGLDAFRAEVEKRVGKKLGAPKPFTFTGNGDRYGWVEGDDGRHHLTLYVPSGRIKDIDGGPQFLSGLRRIAEVHQGDFRLTGNQNVIIANVPAEKRAEIDALVDEYGLTRGASALRRSSLACVALPTCGLALAESERYLPDLMTELEESLASHGLAEEEITIRSTGCPNGCARPFISEIGLVGRGPERYHLYLGAAHDGSRLSKLYKEDVAASEIRDTLDPLFADYARGRQPGEHFGDYLIRAGHVARTTNGPDFHDRTGALKPATLG.

Residues 1–10 (MDDHSPRDAA) are compositionally biased toward basic and acidic residues. Residues 1–35 (MDDHSPRDAAETPAPGPAATPAKRVYETPPTSRPI) are disordered. The segment covering 11–22 (ETPAPGPAATPA) has biased composition (low complexity). The [4Fe-4S] cluster site is built by Cys-470, Cys-476, Cys-515, and Cys-519. Cys-519 is a binding site for siroheme.

It belongs to the nitrite and sulfite reductase 4Fe-4S domain family. In terms of assembly, alpha(8)-beta(8). The alpha component is a flavoprotein, the beta component is a hemoprotein. Requires siroheme as cofactor. [4Fe-4S] cluster serves as cofactor.

The enzyme catalyses hydrogen sulfide + 3 NADP(+) + 3 H2O = sulfite + 3 NADPH + 4 H(+). It participates in sulfur metabolism; hydrogen sulfide biosynthesis; hydrogen sulfide from sulfite (NADPH route): step 1/1. Functionally, component of the sulfite reductase complex that catalyzes the 6-electron reduction of sulfite to sulfide. This is one of several activities required for the biosynthesis of L-cysteine from sulfate. The chain is Sulfite reductase [NADPH] hemoprotein beta-component from Methylobacterium radiotolerans (strain ATCC 27329 / DSM 1819 / JCM 2831 / NBRC 15690 / NCIMB 10815 / 0-1).